Consider the following 153-residue polypeptide: Superoxide dismutase [Cu-Zn] (153 aa).

Cu cation contacts are provided by histidine 45, histidine 47, and histidine 62. The cysteines at positions 56 and 145 are disulfide-linked. Zn(2+) is bound by residues histidine 62, histidine 70, histidine 79, and aspartate 82. Cu cation is bound at residue histidine 119.

The protein belongs to the Cu-Zn superoxide dismutase family. In terms of assembly, homodimer. It depends on Cu cation as a cofactor. Zn(2+) serves as cofactor.

The protein localises to the cytoplasm. The catalysed reaction is 2 superoxide + 2 H(+) = H2O2 + O2. Its function is as follows. Destroys radicals which are normally produced within the cells and which are toxic to biological systems. The protein is Superoxide dismutase [Cu-Zn] of Drosophila orena (Fruit fly).